The chain runs to 715 residues: D-ribulokinase YDR109C (715 aa).

A disordered region spans residues methionine 1–isoleucine 27.

Belongs to the FGGY kinase family.

It carries out the reaction D-ribulose + ATP = D-ribulose 5-phosphate + ADP + H(+). The protein operates within carbohydrate metabolism; pentose and glucuronate interconversion. In terms of biological role, catalyzes ATP-dependent phosphorylation of D-ribulose at C-5 to form D-ribulose 5-phosphate. Postulated to function in a metabolite repair mechanism by preventing toxic accumulation of free D-ribulose formed by non-specific phosphatase activities. Alternatively, may play a role in regulating D-ribulose 5-phosphate recycling in the pentose phosphate pathway. This Saccharomyces cerevisiae (strain ATCC 204508 / S288c) (Baker's yeast) protein is D-ribulokinase YDR109C.